A 265-amino-acid polypeptide reads, in one-letter code: MLIWSPKGRAAAGVVASVLFIVFFFLPLAVILMSSLSQQWNGILPSGFTLNHFVNALHGAAWDALLASLTIGFCASLFALLCGVWAALALRQYGVKTQKWLSMVFYLPSAIPSVSVGLGILVAFSQGPLQMNGTLWIVLTAHFVLISAFTFSNVSTGLARISADIENVASSLGASPWYRLRHVTLPLLMPWMVSALALSLSLSMGELGATVMIYPPGWTTLPVAIFSLTDRGNIADGAALTIVLVAITLLLMMKLERIAKRLGQK.

The next 6 membrane-spanning stretches (helical) occupy residues 13–33, 69–89, 104–124, 131–151, 185–205, and 233–253; these read GVVA…VILM, LTIG…AALA, VFYL…LVAF, MNGT…AFTF, LPLL…LSMG, and NIAD…LLMM. In terms of domain architecture, ABC transmembrane type-1 spans 65-253; sequence LLASLTIGFC…LVAITLLLMM (189 aa).

Belongs to the binding-protein-dependent transport system permease family.

It is found in the cell inner membrane. In terms of biological role, probably part of the PhnSTUV complex (TC 3.A.1.11.5) involved in 2-aminoethylphosphonate import. Probably responsible for the translocation of the substrate across the membrane. This is Putative 2-aminoethylphosphonate transport system permease protein PhnV (phnV) from Salmonella paratyphi A (strain ATCC 9150 / SARB42).